Here is a 587-residue protein sequence, read N- to C-terminus: Nucleoporin p58/p45 (587 aa).

5 repeat units span residues 7-8 (FG), 30-31 (FG), 44-45 (FG), 63-64 (FG), and 68-69 (FG). The interval 7–567 (FGSGTLGSTT…VSNPASAGFG (561 aa)) is 14 X 2 AA repeats of F-G. The disordered stretch occupies residues 196–236 (TSAASNEGLGGIDFSTSSDKKSDKTGTRPEDSKALKDENLP). Over residues 213–234 (SDKKSDKTGTRPEDSKALKDEN) the composition is skewed to basic and acidic residues. 2 coiled-coil regions span residues 244–264 (ENLQ…SRMS) and 302–369 (ETAQ…SHIT). At Thr-319 the chain carries Phosphothreonine. Repeat copies occupy residues 476–477 (FG), 480–481 (FG), 501–502 (FG), 507–508 (FG), 517–518 (FG), 519–520 (FG), 533–534 (FG), 556–557 (FG), and 566–567 (FG). The segment at 565 to 587 (GFGTGGQLLQLKRPPAGNKRGKR) is disordered.

It belongs to the NUP58 family. As to quaternary structure, component of the p62 complex, a complex at least composed of NUP62, NUP54, and NUP58. Interacts with NUTF2. Interacts with SRP1-alpha and Importin p97 proteins when they are together, but not with SRP1-alpha protein alone. Post-translationally, O-glycosylated.

Its subcellular location is the nucleus. The protein resides in the nuclear pore complex. It is found in the nucleus membrane. Functionally, component of the nuclear pore complex, a complex required for the trafficking across the nuclear membrane. In Mus musculus (Mouse), this protein is Nucleoporin p58/p45.